The chain runs to 3083 residues: MAAIMIGSISVPIIGSAQCATAPIGNRVNIVAPGHMAICKPQMRSHAYYKHASQKLSEQSSRGIEVLNSFFNNDPEDAFRLTRNGMSKVKKGPNGRIILRKPKARHVFERINLEKSEKEQKGKFFNGEYDTTVTSIKGVTTSKENDLGAFSLRSPFYKRTCKKEKRRITRENIVCVDDVNNLCERILKITRDKNIPVEIIGKRRNHHTLTFKKFKGSFVGKVSLAPERSQMKHVEMSYGQFDYILQAICRITSTKHVRDEDIKPGCSGWVFSTDHALTQKYSRLPYLVIRGRDDDGIVNALEPVLFYSDVEHYSFQNEVQFFNGWRKMFDKLKPHSDHTCKVDHNNEECGEMAAVLSQAIFPVLKLSCQVCREKLSRVSFEEFKDFLSRNFMTHESEWSTLRDGVHCDNVLKLIKGAVQTTQNLKLSSDIMKLVQNHTSTHMKQIQDINKALMKGSLVTQDELDLALKQLLEMTQWFKNHMHLTGEEALKTFRNKRSNKAMINPSLLCDNQLDKNGNFIWGERGYHSKRLFKNFFEEVIPSEGYTKYIVRNFPNGTRKLAIGSLIVPLNLDRARTALLGESIEKEPLTSACISQQNENYIHSCCCVTMDDGTPMYSELKSPTKRHLVIGASGDPKYIDLPASEAERMYIAKEGYCYLNIFLAMLVNVNENEAKDFTKMIRDVLIPMLGQWPSLMDVATAAYILGVFHPETRCAELPRILVDHATQTMHVIDSYGSLTVGYHVLKAGTVNHLIQFASNDLQSEMKHYRVGGTPTQRIRLEEQLIKGIFKPKIMMQLLHDDPYILLLGMISPTILVHMYRMRHFERGIEIWIKRDHEIGKIFVILEQLTRKVALAEILVDQLDLISEASPHLLEIMNGCQDNQRAYAPALDLLTIQVEREFSNKELKTNGYPDLHQTLHDMREKMYAKQLHNSWQELSLLEKSCVTVRLKQFSIFTERNLTQRAKERKHASSLQFVHECFITTRVHAKSIRDAGVRKLNEALVGTCKFFFSCGFRIFARCYSDIIYFVNVCLVFSLVLQMSNTVRNMIAATREEKERAMANKADENERTLMHMYHIFCKKQDDAPIYNDFLEHVRSVRPDLEETLLYMAGGEVVTAQAKSAVQIQFEKIIAVLALLTMCFDAERSDAIFKILTKLKIVFGTVGETVRLQGLEDIENLEDDKRLTIDFDINTNEAQSSTTFDVHFEDWWNRQLQQNRTVPHYRTTGKFLEFTRSTAAYVANEIASSSEGEFLVRGAVGSGKSTSLPAHLAKKGKVLLLEPTRPLAENVSRQLAGDPFFQNVTLRMRGLSCFGSSNITVMTSGFAFHYYVNNPHQLMEFDFVIIDECHVTDSATIAFNCALKEYSFAGKLIKVSATPPGRECDFDTQFAVKVKTEDHLSFNAFVGAQKTGSNADMVQHGNNILVYVASYNEVDMLSKLLTERQFSVTKVDGRTMQLGKTTIETHGTSQKPHFIVATNIIENGVTLDVECVVDFGLKVVAELDSEKRCVRYSKKPVSYGERIQRLGRVGRSKPGTALRIGHTEKGIENIPEFIATEAAALSFAYGLSVTTHGVSTNNLGKCTVKQMKCALNFELTPFFTTHLIRHDGSMHPLIHEELKQFKLRDSEMVLNKVALPHQFVSQWMDQSEYERIGVHIQCHESTRIPFYTNGIPDKVYERIWKCIQENKNDALFGKLSSAFPSKVSYTLSTDPAALPRTIAIIDHLLAEEMMKRNHFDMISSAVTGYSFSLAGIADSFRKRYMRDHTAHHIAILQQARAQLLEFNSKNVNINNLSDLEGIGVIKSVVLQSKQEVSSFLGLRGKWDGRKFANDVILAVMTLFGGGWFMWEYFTKKVNEPVRVESKKRRSQKLKFRDAYDRKVGREIFGDNDTIGRTFGEAYTKRGKVKGNNSTKGMGRKTRNFVHLYGVEPEIYSFIRFVDPLTGHTLDESTHTDISLVQEEFGNIREKFLENDLISRQSIINKPGIQAYFMGKGTEEALKVDLTPHVPLLLCRNTNAIAGYPERENELRQTGTPIKVSFKEVPEKNEHVELESKSIYKGVRDYNGISTIVCQLTNDSDGLKETMYGIGYGPIIITNGHLFRKNNGTLLVRSWHGEFTVKNTTTLKVHFIEGKDVVLVRMPKDFPPFRSNASFRAPKREERACLVGTNFQEKSLRSTVSESSMTIPEGTGSYWIHWISTNEGDCGLPMVSTTDGKIIGIHGLASTVSSKNYFVPFTDDLLTTHLSKLDDLTWTQHWLWQPSKIAWGSLNLVDEQPGPEFRISNLVKDLLTSGVETQSKRERWVYESCEGNLRAVGSAQSALVTKHVVKGKCPFFEEYLQTHAEANTYFRPLMGEYQPSKLNKEAFKKDFFKYNKPVVVNQLDHDKFLGAVNGVIRMMCDFEFNECRFITDPEEIYDSLNMKAAIGAQYRGKKKEYFEGLDNFDRERLLFQSCERLFNGHKGLWNGSLKAELRPLEKVQANKTRTFTAAPIDTLLGAKVCVDDFNNEFYSKNLKCPWTVGMTKFYGGWDKLMRELPDGWLYCHADGSQFDSSLTPALLNAVLIIRSFYMEDWWVGQEMLENLYAEIVYTPILAPDGTIFKKFRGNNSGQPSTVVDNTLMVVISIYYACMKFGWSYEEIENKLVFFANGDDLILAVKDEDSGLLDNMSASFSELGLNYDFSERTHKREDLWFMSHQAMLVDGMYIPKLEKERIVSILEWDRSKEIMHRTEAICAAMIEAWGHTDLLREIRKFYLWFVEKEEVRELATLGKAPYIAETALRKLYTDKGAETGELARYLQALHQDIFFEQGDTVMLQSDTQTREAGAGASKKDKDEDKDKKKDVASSSASEKAVATATKDKDVNAGSHGKIVPRLSKITKKMSLPRVKGSVILDIDHLLEYKPDQIELYNTRASHQQFASWFNQVKAEYDLNEQQMGVVMNGFMVWCIENGTSPDINGVWVMMDGNEQVEYPLKPIVENAKPTLRQIMHHFSDAAEAYIEMRNAEAPYMPRYGLLRNLRDRSLARYAFDFYEVNSKTPDRAREAVAQMKAAALSNVSSRLFGLDGNVATTSEDTERHTARDVNRNMHTLLGVNTMQ.

Positions 173–313 (IVCVDDVNNL…VLFYSDVEHY (141 aa)) constitute a Peptidase S30 domain. Serine 267 (for P1 proteinase activity) is an active-site residue. Positions 365–368 (KLSC) match the Involved in interaction with stylet and aphid transmission motif. The Involved in virions binding and aphid transmission signature appears at 621–623 (PTK). The Peptidase C6 domain maps to 647–769 (MYIAKEGYCY…QSEMKHYRVG (123 aa)). Residues cysteine 655 and histidine 728 each act as for helper component proteinase activity in the active site. The Helicase ATP-binding domain maps to 1239 to 1391 (EIASSSEGEF…TQFAVKVKTE (153 aa)). 1252–1259 (GAVGSGKS) provides a ligand contact to ATP. The short motif at 1341–1344 (DECH) is the DECH box element. Positions 1410–1569 (DMVQHGNNIL…GLSVTTHGVS (160 aa)) constitute a Helicase C-terminal domain. Residues 1894 to 1903 (KRGKVKGNNS) carry the Nuclear localization signal motif. Tyrosine 1918 carries the O-(5'-phospho-RNA)-tyrosine modification. Residues 2045-2263 (SKSIYKGVRD…IAWGSLNLVD (219 aa)) form the Peptidase C4 domain. Residues histidine 2090, aspartate 2125, and cysteine 2195 each act as for nuclear inclusion protein A activity in the active site. A RdRp catalytic domain is found at 2529 to 2653 (WLYCHADGSQ…AVKDEDSGLL (125 aa)). The segment at 2808–2855 (QTREAGAGASKKDKDEDKDKKKDVASSSASEKAVATATKDKDVNAGSH) is disordered. The segment covering 2817-2831 (SKKDKDEDKDKKKDV) has biased composition (basic and acidic residues). Residues 2832–2844 (ASSSASEKAVATA) are compositionally biased toward low complexity. A Phosphothreonine modification is found at threonine 3065.

Belongs to the potyviridae genome polyprotein family. As to quaternary structure, interacts with host eIF4E protein (via cap-binding region); this interaction mediates the translation of the VPg-viral RNA conjugates. Part of a complex that comprises VPg, RNA, host EIF4E and EIF4G; this interaction mediates the translation of the VPg-viral RNA conjugates. VPg is uridylylated by the polymerase and is covalently attached to the 5'-end of the genomic RNA. This uridylylated form acts as a nucleotide-peptide primer for the polymerase. In terms of processing, potyviral RNA is expressed as two polyproteins which undergo post-translational proteolytic processing. Genome polyprotein is processed by NIa-pro, P1 and HC-pro proteinases resulting in the production of at least ten individual proteins. P3N-PIPO polyprotein is cleaved by P1 and HC-pro proteinases resulting in the production of three individual proteins. The P1 proteinase and the HC-pro cleave only their respective C-termini autocatalytically. 6K1 is essential for proper proteolytic separation of P3 from CI.

It localises to the host cytoplasmic vesicle. It is found in the host nucleus. The protein resides in the virion. It catalyses the reaction RNA(n) + a ribonucleoside 5'-triphosphate = RNA(n+1) + diphosphate. It carries out the reaction Hydrolyzes glutaminyl bonds, and activity is further restricted by preferences for the amino acids in P6 - P1' that vary with the species of potyvirus, e.g. Glu-Xaa-Xaa-Tyr-Xaa-Gln-|-(Ser or Gly) for the enzyme from tobacco etch virus. The natural substrate is the viral polyprotein, but other proteins and oligopeptides containing the appropriate consensus sequence are also cleaved.. The enzyme catalyses Hydrolyzes a Gly-|-Gly bond at its own C-terminus, commonly in the sequence -Tyr-Xaa-Val-Gly-|-Gly, in the processing of the potyviral polyprotein.. Its function is as follows. Required for aphid transmission and also has proteolytic activity. Only cleaves a Gly-Gly dipeptide at its own C-terminus. Interacts with virions and aphid stylets. Acts as a suppressor of RNA-mediated gene silencing, also known as post-transcriptional gene silencing (PTGS), a mechanism of plant viral defense that limits the accumulation of viral RNAs. May have RNA-binding activity. Has helicase activity. It may be involved in replication. Functionally, indispensable for virus replication. Reduces the abundance of host transcripts related to jasmonic acid biosynthesis therefore altering the host defenses. In order to increase its own stability, decreases host protein degradation pathways. In terms of biological role, indispensable for virus replication. Its function is as follows. Mediates the cap-independent, EIF4E-dependent translation of viral genomic RNAs. Binds to the cap-binding site of host EIF4E and thus interferes with the host EIF4E-dependent mRNA export and translation. VPg-RNA directly binds EIF4E and is a template for transcription. Also forms trimeric complexes with EIF4E-EIF4G, which are templates for translation. Has RNA-binding and proteolytic activities. Functionally, an RNA-dependent RNA polymerase that plays an essential role in the virus replication. In terms of biological role, involved in aphid transmission, cell-to-cell and systemis movement, encapsidation of the viral RNA and in the regulation of viral RNA amplification. The sequence is that of Genome polyprotein from Zucchini yellow mosaic virus (strain Singapore) (ZYMV).